Here is a 735-residue protein sequence, read N- to C-terminus: Catalase-peroxidase (735 aa).

The segment at residues 97-220 is a cross-link (tryptophyl-tyrosyl-methioninium (Trp-Tyr) (with M-246)); it reads WHAAGTYRIG…LAAVQMGLIY (124 aa). Residue H98 is the Proton acceptor of the active site. Positions 220-246 form a cross-link, tryptophyl-tyrosyl-methioninium (Tyr-Met) (with W-97); sequence YVNPEGPNGKPDPMAAAHDIRETFGRM. Position 261 (H261) interacts with heme b. The disordered stretch occupies residues 342–362; sequence AHQWTPKNPEAASTVPDAHDP.

This sequence belongs to the peroxidase family. Peroxidase/catalase subfamily. In terms of assembly, homodimer or homotetramer. Heme b is required as a cofactor. Formation of the three residue Trp-Tyr-Met cross-link is important for the catalase, but not the peroxidase activity of the enzyme.

It carries out the reaction H2O2 + AH2 = A + 2 H2O. The catalysed reaction is 2 H2O2 = O2 + 2 H2O. Its function is as follows. Bifunctional enzyme with both catalase and broad-spectrum peroxidase activity. The chain is Catalase-peroxidase from Gloeobacter violaceus (strain ATCC 29082 / PCC 7421).